Consider the following 988-residue polypeptide: Transcriptional regulator of yeast form adherence 5 (988 aa).

2 consecutive C2H2-type zinc fingers follow at residues 7 to 29 (YICA…ERSH) and 35 to 59 (FHCL…TVHH). Positions 59–83 (HTNLNPSTLPSNKSLKNPTTNPLDL) are enriched in polar residues. 2 disordered regions span residues 59–129 (HTNL…SSVG) and 174–229 (SMES…SNNN). Over residues 84 to 106 (SNNEGTTTTTKTGNRKNNSNKNG) the composition is skewed to low complexity. Composition is skewed to polar residues over residues 113 to 129 (TNPN…SSVG) and 174 to 208 (SMES…EIVL).

It localises to the nucleus. Its function is as follows. Transcription factor required for yeast cell adherence to silicone substrate. The polypeptide is Transcriptional regulator of yeast form adherence 5 (TRY5) (Candida albicans (strain SC5314 / ATCC MYA-2876) (Yeast)).